Consider the following 205-residue polypeptide: Golgi apparatus membrane protein TVP23 homolog B (205 aa).

At methionine 1 the chain carries N-acetylmethionine. Residues 1–21 are disordered; that stretch reads MLQQDSNDDTEDVSLFDAEEE. A run of 4 helical transmembrane segments spans residues 34 to 53, 54 to 72, 126 to 146, and 152 to 172; these read PVAS…VYLL, CGLL…ILLL, IFWL…FSAL, and KWLA…YGYI.

The protein belongs to the TVP23 family.

It localises to the membrane. In Homo sapiens (Human), this protein is Golgi apparatus membrane protein TVP23 homolog B (TVP23B).